The primary structure comprises 181 residues: Peptide deformylase (181 aa).

Fe cation-binding residues include cysteine 104 and histidine 146. Glutamate 147 is a catalytic residue. Histidine 150 serves as a coordination point for Fe cation.

It belongs to the polypeptide deformylase family. Fe(2+) is required as a cofactor.

It catalyses the reaction N-terminal N-formyl-L-methionyl-[peptide] + H2O = N-terminal L-methionyl-[peptide] + formate. In terms of biological role, removes the formyl group from the N-terminal Met of newly synthesized proteins. Requires at least a dipeptide for an efficient rate of reaction. N-terminal L-methionine is a prerequisite for activity but the enzyme has broad specificity at other positions. The chain is Peptide deformylase from Helicobacter hepaticus (strain ATCC 51449 / 3B1).